A 591-amino-acid polypeptide reads, in one-letter code: Aspartate--tRNA ligase (591 aa).

Glu173 is an L-aspartate binding site. The tract at residues Gln197–Lys200 is aspartate. L-aspartate is bound at residue Arg219. ATP-binding positions include Arg219–Glu221 and Gln228. His448 provides a ligand contact to L-aspartate. Glu482 is an ATP binding site. Arg489 contacts L-aspartate. ATP is bound at residue Gly534 to Arg537.

Belongs to the class-II aminoacyl-tRNA synthetase family. Type 1 subfamily. In terms of assembly, homodimer.

The protein resides in the cytoplasm. It carries out the reaction tRNA(Asp) + L-aspartate + ATP = L-aspartyl-tRNA(Asp) + AMP + diphosphate. Functionally, catalyzes the attachment of L-aspartate to tRNA(Asp) in a two-step reaction: L-aspartate is first activated by ATP to form Asp-AMP and then transferred to the acceptor end of tRNA(Asp). This is Aspartate--tRNA ligase from Shewanella sp. (strain MR-4).